Consider the following 919-residue polypeptide: Chitin synthase 1 (919 aa).

Disordered stretches follow at residues 1 to 69 (MSYD…SFQT) and 109 to 134 (NLASQSGFPPSTPCGGPSSYSSALGP). The span at 11–30 (GQGRDYARQQRQQRSYQLSD) shows a compositional bias: low complexity. Asn187 and Asn556 each carry an N-linked (GlcNAc...) asparagine glycan. 7 consecutive transmembrane segments (helical) span residues 594–614 (IVLLFSWFALANLWLTFSIII), 630–650 (LVVFHWINQAAKWIYVFFLVL), 668–688 (IASFIVFGILGLYLIFVSLWL), 713–733 (VLIAALAATFGIYLIASILYA), 742–762 (FPQYMMIAPSFINILNVYAFC), 843–863 (LVAFWLLTNGALTVAIENVNG), and 887–919 (IILWATFGLSAFRFIGCLIYWVKRNSTRCFRKT).

Belongs to the chitin synthase family. Class III subfamily.

It is found in the cell membrane. It localises to the cytoplasmic vesicle membrane. The catalysed reaction is [(1-&gt;4)-N-acetyl-beta-D-glucosaminyl](n) + UDP-N-acetyl-alpha-D-glucosamine = [(1-&gt;4)-N-acetyl-beta-D-glucosaminyl](n+1) + UDP + H(+). In terms of biological role, polymerizes chitin, a structural polymer of the cell wall and septum, by transferring the sugar moiety of UDP-GlcNAc to the non-reducing end of the growing chitin polymer. In Mycosarcoma maydis (Corn smut fungus), this protein is Chitin synthase 1.